Here is a 501-residue protein sequence, read N- to C-terminus: MLPPKIFFEKVKEIIWPIERKELKLFIPMALMMLCILFNFGALRSIKDSLVVPSMGAEIISLFKLWLVLPSCVIFTVLYVKLSNKLNFEYIFYIIVGSFLLFFLLFAYIIYPNQDIYHPNDEMINNLIASYPNFKWFIKIGSKWSYALMYIFSELWSAVVINLMFWQFANHIFDTSKAKRFYPVLGMVGNIGLIIAGSVLVFFSSGQEVIDSELLPDSFNSPAGNAIMLQPIMSIIVAAGIIAMLLFRIINRFILTDSINVLDTKKVTVKTKTKLSVIESIKLVIHSKYIGRIALLIICYGLLINIVEGPWKAKIKELHPNTIDYFNFMGRFNIWMGISCVTFMVIGSNILRRLGWLISALLTPIMLSITGLMFFIFIIFIEEIGACFGDFNLLYAAIIVGAIQNILSKSSKYSLFDSTKEMAYIPLSLELRTKGKAAVEVIGTKFGKSLGAFIQSLIFIIIPTATFDSIIIYLLVIFIVMMSLWIWNVIKLNKEYIELCK.

The next 12 helical transmembrane spans lie at 23 to 43, 59 to 79, 90 to 110, 146 to 166, 183 to 203, 227 to 247, 293 to 313, 326 to 346, 361 to 381, 383 to 403, 446 to 466, and 470 to 490; these read LKLF…FGAL, IISL…TVLY, YIFY…AYII, YALM…LMFW, PVLG…LVFF, IMLQ…MLLF, IALL…PWKA, FNFM…FMVI, LLTP…IIFI, EIGA…VGAI, FGKS…PTAT, and IIIY…WNVI.

It belongs to the ADP/ATP translocase tlc family.

It localises to the cell membrane. Functionally, provides the rickettsial cell with host ATP in exchange for rickettsial ADP. This is an obligate exchange system. This energy acquiring activity is an important component of rickettsial parasitism. In Rickettsia felis (strain ATCC VR-1525 / URRWXCal2) (Rickettsia azadi), this protein is ADP,ATP carrier protein 3 (tlcC).